The primary structure comprises 508 residues: Protein phosphatase PP2A regulatory subunit B (508 aa).

WD repeat units follow at residues 19-58 (TEAD…KKQS), 81-122 (EIEE…IKLV), 166-204 (AHAY…QSFN), 215-255 (ELTE…LCDS), 274-312 (EITS…KPIK), and 329-370 (ENDA…GNDD). The tract at residues 369 to 466 (DDKPKFKSAF…MRRRMTSGVG (98 aa)) is disordered. A compositionally biased stretch (acidic residues) spans 396–418 (DDDDDDDDDDDDEEADDEFDEEV). Residues 447-461 (FKSKKSGQHPMRRRM) are compositionally biased toward basic residues. Residues 477 to 507 (DFKKSILHLSWHPRENSVAIAATNNLYIFST) form a WD 7 repeat.

It belongs to the phosphatase 2A regulatory subunit B family. In terms of assembly, PP2A exists in several trimeric forms, all of which consist of a core composed of a catalytic subunit associated with a 65 kDa (PR65) (Subunit A) and a 55 kDa (PR55) (Subunit B) regulatory subunit.

In terms of biological role, phosphatase 2A affects a variety of biological processes in the cell such as transcription, cell cycle progression and cellular morphogenesis, and provides an initial identification of critical substrates for this phosphatase. The regulatory subunit may direct the catalytic subunit to distinct, albeit overlapping, subsets of substrates. In Candida tropicalis (Yeast), this protein is Protein phosphatase PP2A regulatory subunit B (CDC55).